The following is a 369-amino-acid chain: Putative 2-aminoethylphosphonate import ATP-binding protein PhnT (369 aa).

The ABC transporter domain maps to 19 to 250; it reads IVLDSLRVAY…PPNRFAAEFL (232 aa). 51–58 provides a ligand contact to ATP; sequence GPSGSGKT.

Belongs to the ABC transporter superfamily. 2-aminoethylphosphonate importer (TC 3.A.1.11.5) family.

It localises to the cell inner membrane. Probably part of the PhnSTUV complex (TC 3.A.1.11.5) involved in 2-aminoethylphosphonate import. Probably responsible for energy coupling to the transport system. In Salmonella typhi, this protein is Putative 2-aminoethylphosphonate import ATP-binding protein PhnT (phnT).